A 78-amino-acid chain; its full sequence is Large ribosomal subunit protein bL28 (78 aa).

The segment at 1 to 23 (MSRICQITGKKPLSGNKRSHSMN) is disordered.

The protein belongs to the bacterial ribosomal protein bL28 family.

This chain is Large ribosomal subunit protein bL28, found in Wigglesworthia glossinidia brevipalpis.